Reading from the N-terminus, the 418-residue chain is Perilipin-1 homolog (418 aa).

The segment at Leu-211–Ser-275 is required for lipid droplet localization.

This sequence belongs to the perilipin family. As to expression, expressed in intestinal and epidermal cells. Expressed in the muscle and hypodermis.

It localises to the lipid droplet. Lipid droplet-associated protein which plays a role in lipid droplet clustering. This chain is Perilipin-1 homolog, found in Caenorhabditis elegans.